A 537-amino-acid polypeptide reads, in one-letter code: CWF19-like protein 1 (537 aa).

Positions 297-323 (KQGRKRPSTGRDTRPPHAKQPRKPPQP) are disordered.

Belongs to the CWF19 family.

The polypeptide is CWF19-like protein 1 (Cwf19l1) (Mus musculus (Mouse)).